The chain runs to 514 residues: Adenylosuccinate synthetase 2, chloroplastic (514 aa).

The transit peptide at 1–56 (MAMAAAAAVASQGLLATSSQQQKKSSAKLICNAATFFSGKRLLWVKSCNNGAVGLR) directs the protein to the chloroplast. Residues 100 to 106 (GDEGKGK) and 128 to 130 (GHT) contribute to the GTP site. The active-site Proton acceptor is D101. Mg(2+) is bound by residues D101 and G128. Residues 101-104 (DEGK), 126-129 (NAGH), T218, R232, Q312, T327, and R391 each bind IMP. The active-site Proton donor is H129. Residue 387–393 (TTTGRPR) coordinates substrate. Residues R393, 419-421 (KLD), and 502-504 (GVG) each bind GTP.

It belongs to the adenylosuccinate synthetase family. As to quaternary structure, homodimer. Mg(2+) serves as cofactor.

It localises to the plastid. The protein localises to the chloroplast. It carries out the reaction IMP + L-aspartate + GTP = N(6)-(1,2-dicarboxyethyl)-AMP + GDP + phosphate + 2 H(+). It functions in the pathway purine metabolism; AMP biosynthesis via de novo pathway; AMP from IMP: step 1/2. Its function is as follows. Plays an important role in the de novo pathway and in the salvage pathway of purine nucleotide biosynthesis. Catalyzes the first committed step in the biosynthesis of AMP from IMP. This is Adenylosuccinate synthetase 2, chloroplastic from Physcomitrium patens (Spreading-leaved earth moss).